The sequence spans 436 residues: MTDRTPPQGRARRLFSRTSWPEARFLADVLRTETFGGGLLLLGAVLALLWANSPWADSYAALASWVPWPGGSDLHLDLDLATWAADGLLAIFFFVVGLELKREFVAGDLRDPRRAALPVVAAIGGMIVPALIYVGINLAAGGENLRGWAIPTATDIAFALAVLAVIGSHLPQGLRAFLLTLAVVDDLLAITVIAIFYTGDFKLTPLLVALLPIALFGLLVQRRKTWWWALIPLAVVAWTLVHESGVHATVAGVLLGFTVPVLRGREGDRHGLAEHLEHRWRPVSAGFAVPVFAFFAAGVSLRGADLGGIVTDPIVVGIVAGLVLGKVLGIFGSTFMLARFTRAELDRDITWTDLLGVSLLAGIGFTVSLLIGELAFEGGTAGDNVKAAVLTGSVIAALLASAVLSRRNKAYRRIAAKERLDSNRDGVPDVFQHRDG.

Transmembrane regions (helical) follow at residues 35–55 (FGGGLLLLGAVLALLWANSPW), 80–100 (LATWAADGLLAIFFFVVGLEL), 116–136 (ALPVVAAIGGMIVPALIYVGI), 147–167 (GWAIPTATDIAFALAVLAVIG), 176–196 (AFLLTLAVVDDLLAITVIAIF), 201–221 (FKLTPLLVALLPIALFGLLVQ), 226–246 (WWWALIPLAVVAWTLVHESGV), 283–303 (VSAGFAVPVFAFFAAGVSLRG), 313–333 (PIVVGIVAGLVLGKVLGIFGS), 354–374 (LLGVSLLAGIGFTVSLLIGEL), and 385–405 (VKAAVLTGSVIAALLASAVLS).

It belongs to the NhaA Na(+)/H(+) (TC 2.A.33) antiporter family.

It localises to the cell membrane. The catalysed reaction is Na(+)(in) + 2 H(+)(out) = Na(+)(out) + 2 H(+)(in). Functionally, na(+)/H(+) antiporter that extrudes sodium in exchange for external protons. This chain is Na(+)/H(+) antiporter NhaA 2, found in Salinispora arenicola (strain CNS-205).